A 74-amino-acid polypeptide reads, in one-letter code: Conotoxin AbVII (74 aa).

Residues 1–17 form the signal peptide; that stretch reads VLIIAVLFLTACQLTTA. Residues 18–40 constitute a propeptide that is removed on maturation; the sequence is ETSSRGKQKHRALRSTDKNSRMT. The disordered stretch occupies residues 19–41; that stretch reads TSSRGKQKHRALRSTDKNSRMTK. Intrachain disulfides connect C43–C57, C50–C61, and C56–C68.

Belongs to the conotoxin O1 superfamily. Expressed by the venom duct.

The protein resides in the secreted. This chain is Conotoxin AbVII, found in Conus abbreviatus (Abbreviated cone).